The following is a 310-amino-acid chain: Protein BIG GRAIN 1 (310 aa).

The interval 77–140 (SYRARAPGPH…EKKAKKPGAS (64 aa)) is disordered. Residues 90-106 (SSSSECSSYGGFSSSEA) are compositionally biased toward low complexity.

This sequence belongs to the BIG GRAIN 1 (BG1) plant protein family. As to expression, mostly expressed in the vascular tissues of leaves, culms and young panicles, especially in hulls.

The protein localises to the cell membrane. Functionally, involved in auxin transport. Positive regulator of the auxin signaling pathway involved in gravitropism, plant growth and grain development. This is Protein BIG GRAIN 1 from Oryza sativa subsp. japonica (Rice).